We begin with the raw amino-acid sequence, 758 residues long: Glucocorticoid receptor (758 aa).

Disordered stretches follow at residues 1 to 61 and 349 to 382; these read MDPG…SANG and GMSS…PSGP. The modulating stretch occupies residues 1 to 386; it reads MDPGGLKHSK…AKPSGPTHKI (386 aa). The span at 26-42 shows a compositional bias: low complexity; that stretch reads GSFSGDTGGSKSTTSTS. 2 consecutive NR C4-type zinc fingers follow at residues 387–407 and 432–456; these read CLVC…CGSC and CAGR…FRKC. The segment at residues 387 to 461 is a DNA-binding region (nuclear receptor); it reads CLVCSDEASG…RFRKCLQAGM (75 aa). Positions 462–498 are hinge; the sequence is NLEARKNKKLIRLKGQQTTMEPNPPPPDERACALIPK. The 235-residue stretch at 499–733 folds into the NR LBD domain; it reads SMPQLVPTML…FPEMLAEIIS (235 aa).

Belongs to the nuclear hormone receptor family. NR3 subfamily. As to quaternary structure, heteromultimeric cytoplasmic complex with HSP90AA1, HSPA1A/HSPA1B, and FKBP5 or another immunophilin such as PPID, STIP1, or the immunophilin homolog PPP5C. Upon ligand binding FKBP5 dissociates from the complex and FKBP4 takes its place, thereby linking the complex to dynein and mediating transport to the nucleus, where the complex dissociates. Directly interacts with UNC45A. Binds to DNA as a homodimer, and as heterodimer with NR3C2 or the retinoid X receptor. Binds STAT5A and STAT5B homodimers and heterodimers. Interacts with NRIP1, POU2F1, POU2F2 and TRIM28. Interacts with several coactivator complexes, including the SMARCA4 complex, CREBBP/EP300, TADA2L (Ada complex) and p160 coactivators such as NCOA2 and NCOA6. Interaction with BAG1 inhibits transactivation. Interacts with HEXIM1, PELP1 and TGFB1I1. Interacts with NCOA1, NCOA3, SMARCA4, SMARCC1, SMARCD1, and SMARCE1. Post-translationally, phosphorylated in the absence of hormone; becomes hyperphosphorylated in the presence of glucocorticoids. May be dephosphorylated by PPP5C, attenuates NR3C1 action. Isoform 1 is expressed in all tissues tested including liver, gills, intestine, skeletal muscle, kidney, heart, spleen, stomach, brain, pituitary, ovary, testis, skin and bladder. Isoform 2 is found only in testis.

Its subcellular location is the cytoplasm. It localises to the nucleus. The protein localises to the mitochondrion. It is found in the cytoskeleton. The protein resides in the spindle. Its subcellular location is the microtubule organizing center. It localises to the centrosome. Functionally, receptor for glucocorticoids (GC). Has a dual mode of action: as a transcription factor that binds to glucocorticoid response elements (GRE), both for nuclear and mitochondrial DNA, and as a modulator of other transcription factors. Affects inflammatory responses, cellular proliferation and differentiation in target tissues. Involved in chromatin remodeling. Plays a role in rapid mRNA degradation by binding to the 5' UTR of target mRNAs and interacting with PNRC2 in a ligand-dependent manner which recruits the RNA helicase UPF1 and the mRNA-decapping enzyme DCP1A, leading to RNA decay. Could act as a coactivator for STAT5-dependent transcription upon growth hormone (GH) stimulation and could reveal an essential role of hepatic GR in the control of body growth. Mediates glucocorticoid-induced apoptosis. Promotes accurate chromosome segregation during mitosis. May act as a tumor suppressor. May play a negative role in adipogenesis through the regulation of lipolytic and antilipogenic gene expression. The polypeptide is Glucocorticoid receptor (nr3c1) (Oncorhynchus mykiss (Rainbow trout)).